Here is a 670-residue protein sequence, read N- to C-terminus: Transcriptional regulatory protein DOT6 (670 aa).

Over residues 1 to 44 (MSISTSLNSASIHLSSMDTHPQLHSLTRQPHSSSTAMSKNEAQE) the composition is skewed to polar residues. Positions 1-78 (MSISTSLNSA…SKNPSSWDPQ (78 aa)) are disordered. The segment covering 45 to 74 (SSPSLPASSSSSTSASASASSKNSSKNPSS) has biased composition (low complexity). The region spanning 67 to 121 (NSSKNPSSWDPQDDLLLRHLKEVKKMGWKDISQYFPNRTPNACQFRWRRLKSGNL) is the HTH myb-type domain. A DNA-binding region (H-T-H motif) is located at residues 94–117 (WKDISQYFPNRTPNACQFRWRRLK). Over residues 226–242 (HHPHQHLHHHPHHKTLK) the composition is skewed to basic residues. 4 disordered regions span residues 226–250 (HHPH…SHSF), 293–332 (TTPS…NTSR), 406–436 (HSSS…CNPT), and 483–659 (ADML…NSPL). Phosphoserine occurs at positions 245 and 247. Composition is skewed to low complexity over residues 295–307 (PSSP…LLSS) and 316–332 (NWSR…NTSR). Over residues 425-436 (SGHSMKSSCNPT) the composition is skewed to polar residues. Phosphoserine is present on Ser-487. Thr-489 is subject to Phosphothreonine. Ser-491 bears the Phosphoserine mark. The segment covering 512–522 (DDDKGSDKEDV) has biased composition (basic and acidic residues). 2 stretches are compositionally biased toward low complexity: residues 544–561 (SSNK…SSKD) and 587–598 (TITSDTSSSAAT). Over residues 599–608 (MNRTPNSKNP) the composition is skewed to polar residues. A compositionally biased stretch (low complexity) spans 622 to 659 (ITPRPKPSSTTTSITTETTNNMINHSSSTTTTTNNSPL).

Belongs to the DOT6 family. In terms of assembly, component of the RPD3C(L) complex composed of at least ASH1, CTI6, DEP1, DOT6, PHO23, RPD3, RXT2, RXT3, SAP30, SDS3, SIN3, TOD6; UME1 and UME6.

Its subcellular location is the nucleus. Functionally, component of the RPD3 histone deacetylase complex RPD3C(L) responsible for the deacetylation of lysine residues on the N-terminal part of the core histones (H2A, H2B, H3 and H4). Histone deacetylation gives a tag for epigenetic repression and plays an important role in transcriptional regulation, cell cycle progression and developmental events. DOT6 binds to sequences containing the core CGATG, which resembles the PAC (Polymerase A and C) motif. This is Transcriptional regulatory protein DOT6 (DOT6) from Saccharomyces cerevisiae (strain ATCC 204508 / S288c) (Baker's yeast).